The chain runs to 350 residues: Cytosolic sulfotransferase 18 (350 aa).

An N-acetylmethionine modification is found at methionine 1. The segment covering 1–17 has biased composition (low complexity); that stretch reads MESETLTAKATITTTTL. The segment at 1–28 is disordered; that stretch reads MESETLTAKATITTTTLPSHDETKTEST. The segment covering 19 to 28 has biased composition (basic and acidic residues); sequence SHDETKTEST. Position 93 to 98 (93 to 98) interacts with 3'-phosphoadenylyl sulfate; sequence KTGTTW. Residue histidine 155 is the Proton acceptor of the active site. Residues arginine 177, serine 185, tyrosine 243, and 313 to 315 contribute to the 3'-phosphoadenylyl sulfate site; that span reads RKG.

This sequence belongs to the sulfotransferase 1 family. As to expression, expressed in roots, leaves and stems. Barely detected in siliques and flowers.

Its subcellular location is the cytoplasm. The enzyme catalyses an aliphatic (Z)-desulfo-glucosinolate + 3'-phosphoadenylyl sulfate = a (Z)-omega-(methylsulfanyl)-N-sulfo-alkylhydroximate S-glucoside + adenosine 3',5'-bisphosphate + H(+). Its activity is regulated as follows. Inhibited by phosphoadenosine 5'-phosphate (PAP). Its function is as follows. Sulfotransferase that utilizes 3'-phospho-5'-adenylyl sulfate (PAPS) as sulfonate donor to catalyze the sulfate conjugation of desulfo-glucosinolates (dsGSs), the final step in the biosynthesis of the glucosinolate core structure. Preferred substrate are the long-chain desulfo-glucosinolates, 7-methylthioheptyl and 8-methylthiooctyl, derived from methionine. Substrate preference is desulfo-benzyl glucosinolate &gt; desulfo-4-methylthiobutyl glucosinolate &gt; desulfo-6-methylthiohexyl glucosinolate &gt; desulfo-3-methylthiopropyl glucosinolate &gt; desulfo-indol-3-yl methyl glucosinolate &gt; desulfo-singrin &gt; desulfo-3-butenyl glucosinolate. The polypeptide is Cytosolic sulfotransferase 18 (SOT18) (Arabidopsis thaliana (Mouse-ear cress)).